We begin with the raw amino-acid sequence, 154 residues long: Low molecular weight protein-tyrosine-phosphatase PtpA (154 aa).

Cysteine 8 acts as the Nucleophile in catalysis. Residue arginine 14 is part of the active site. Aspartate 120 serves as the catalytic Proton donor.

Belongs to the low molecular weight phosphotyrosine protein phosphatase family.

It carries out the reaction O-phospho-L-tyrosyl-[protein] + H2O = L-tyrosyl-[protein] + phosphate. In terms of biological role, dephosphorylates the phosphotyrosine-containing proteins. The chain is Low molecular weight protein-tyrosine-phosphatase PtpA (ptpA) from Staphylococcus epidermidis (strain ATCC 35984 / DSM 28319 / BCRC 17069 / CCUG 31568 / BM 3577 / RP62A).